The primary structure comprises 878 residues: Leucine--tRNA ligase (878 aa).

The 'HIGH' region motif lies at 43 to 53 (PYPSGRIHIGH). The 'KMSKS' region motif lies at 630–634 (KMSKS). Lys633 is a binding site for ATP.

Belongs to the class-I aminoacyl-tRNA synthetase family.

It localises to the cytoplasm. It catalyses the reaction tRNA(Leu) + L-leucine + ATP = L-leucyl-tRNA(Leu) + AMP + diphosphate. The protein is Leucine--tRNA ligase of Nitrobacter hamburgensis (strain DSM 10229 / NCIMB 13809 / X14).